The primary structure comprises 590 residues: UvrABC system protein C (590 aa).

The GIY-YIG domain occupies 14-91 (EQPGCYLMKD…IKKHDPKYNV (78 aa)). Residues 196 to 231 (EDVKRELAEKMHEAAETLEFERAKEYRDQIAAIEMT) form the UVR domain.

The protein belongs to the UvrC family. As to quaternary structure, interacts with UvrB in an incision complex.

It localises to the cytoplasm. Its function is as follows. The UvrABC repair system catalyzes the recognition and processing of DNA lesions. UvrC both incises the 5' and 3' sides of the lesion. The N-terminal half is responsible for the 3' incision and the C-terminal half is responsible for the 5' incision. This Geobacillus kaustophilus (strain HTA426) protein is UvrABC system protein C.